We begin with the raw amino-acid sequence, 284 residues long: Tropomyosin (284 aa).

Residues 1–284 are a coiled coil; the sequence is MDAIKKKMLA…DSTFAELAGY (284 aa). The segment at 105-131 is disordered; it reads RLQSATEKLEEASKAADESERGRKVLE.

This sequence belongs to the tropomyosin family. In terms of assembly, homodimer.

In terms of biological role, tropomyosin, in association with the troponin complex, plays a central role in the calcium dependent regulation of muscle contraction. This Cornu aspersum (Brown garden snail) protein is Tropomyosin.